A 313-amino-acid polypeptide reads, in one-letter code: Glycine--tRNA ligase alpha subunit (313 aa).

The protein belongs to the class-II aminoacyl-tRNA synthetase family. Tetramer of two alpha and two beta subunits.

The protein localises to the cytoplasm. The enzyme catalyses tRNA(Gly) + glycine + ATP = glycyl-tRNA(Gly) + AMP + diphosphate. The polypeptide is Glycine--tRNA ligase alpha subunit (Leuconostoc mesenteroides subsp. mesenteroides (strain ATCC 8293 / DSM 20343 / BCRC 11652 / CCM 1803 / JCM 6124 / NCDO 523 / NBRC 100496 / NCIMB 8023 / NCTC 12954 / NRRL B-1118 / 37Y)).